Consider the following 367-residue polypeptide: uncharacterized protein (367 aa).

Positions 1 to 96 (ITLHRLAELV…LTATLQLQPV (96 aa)) constitute an FAD-binding PCMH-type domain.

This sequence to M.tuberculosis Rv3790.

This is an uncharacterized protein from Streptomyces coelicolor.